The primary structure comprises 493 residues: Alpha-amylase-related protein (493 aa).

Residues 1–19 (MFKFALALTLCLAGSLSLA) form the signal peptide. The residue at position 20 (Q20) is a Pyrrolidone carboxylic acid. A disulfide bond links C47 and C103. Residues N117, Q168, and D177 each contribute to the Ca(2+) site. Residues C156 and C170 are joined by a disulfide bond. Chloride is bound at residue R205. Residue D207 is the Nucleophile of the active site. Residue H211 participates in Ca(2+) binding. The active-site Proton donor is the E244. Residues N307 and R342 each contribute to the chloride site. 3 disulfides stabilise this stretch: C375/C381, C417/C440, and C447/C459.

This sequence belongs to the glycosyl hydrolase 13 family. In terms of assembly, monomer. The cofactor is Ca(2+). Chloride is required as a cofactor.

The protein localises to the secreted. The catalysed reaction is Endohydrolysis of (1-&gt;4)-alpha-D-glucosidic linkages in polysaccharides containing three or more (1-&gt;4)-alpha-linked D-glucose units.. The protein is Alpha-amylase-related protein (Amyrel) of Drosophila elegans (Fruit fly).